Here is a 205-residue protein sequence, read N- to C-terminus: Basonuclin zinc finger protein homolog (205 aa).

2 consecutive C2H2-type zinc fingers follow at residues 107 to 130 and 135 to 164; these read VACDICSKSFCDKGALKIHTSAVH and HTCTVTGCGKQFSSRRSRNRHSSNNNPKLH. Residues 145-168 form a disordered region; sequence QFSSRRSRNRHSSNNNPKLHMPES.

Expressed in the VA and VB motor neurons and at lower levels in the SABV neuron pair.

It localises to the nucleus. Functionally, probable transcription factor. Involved in motor neuron fate determination and maintenance, acting as a transcriptional repressor to counteract gene activation by transcription factor unc-3 in a subset of motor neurons. Required throughout development to repress transcription by unc-3, probably acting by binding to specific promoter elements. Represses expression of DA and DB motor neuron-specific effector genes, such as unc-129 and unc-53, in VA and VB motor neurons. The sequence is that of Basonuclin zinc finger protein homolog from Caenorhabditis elegans.